A 261-amino-acid polypeptide reads, in one-letter code: Kynurenine formamidase (261 aa).

A Phosphoserine modification is found at Ser9. The HGGXW motif lies at 36–40; the sequence is HGGAW. The active-site Nucleophile is Ser110. Catalysis depends on residues Asp211 and His243.

This sequence belongs to the kynurenine formamidase family. In terms of assembly, homodimer.

It catalyses the reaction N-formyl-L-kynurenine + H2O = L-kynurenine + formate + H(+). It participates in amino-acid degradation; L-tryptophan degradation via kynurenine pathway; L-kynurenine from L-tryptophan: step 2/2. Functionally, catalyzes the hydrolysis of N-formyl-L-kynurenine to L-kynurenine, the second step in the kynurenine pathway of tryptophan degradation. Kynurenine may be further oxidized to nicotinic acid, NAD(H) and NADP(H). Required for elimination of toxic metabolites. This is Kynurenine formamidase from Saccharomyces cerevisiae (strain ATCC 204508 / S288c) (Baker's yeast).